Reading from the N-terminus, the 336-residue chain is Anthranilate phosphoribosyltransferase (336 aa).

5-phospho-alpha-D-ribose 1-diphosphate-binding positions include G79, 82-83 (GD), T87, 89-92 (NIST), 107-115 (KHGNRSVSS), and S119. Residue G79 participates in anthranilate binding. Position 91 (S91) interacts with Mg(2+). Position 110 (N110) interacts with anthranilate. Anthranilate is bound at residue R165. Residues D224 and E225 each contribute to the Mg(2+) site.

It belongs to the anthranilate phosphoribosyltransferase family. Homodimer. Requires Mg(2+) as cofactor.

It catalyses the reaction N-(5-phospho-beta-D-ribosyl)anthranilate + diphosphate = 5-phospho-alpha-D-ribose 1-diphosphate + anthranilate. It functions in the pathway amino-acid biosynthesis; L-tryptophan biosynthesis; L-tryptophan from chorismate: step 2/5. In terms of biological role, catalyzes the transfer of the phosphoribosyl group of 5-phosphorylribose-1-pyrophosphate (PRPP) to anthranilate to yield N-(5'-phosphoribosyl)-anthranilate (PRA). This chain is Anthranilate phosphoribosyltransferase, found in Endomicrobium trichonymphae.